Reading from the N-terminus, the 341-residue chain is Phenylalanine--tRNA ligase alpha subunit (341 aa).

Glu-254 serves as a coordination point for Mg(2+).

The protein belongs to the class-II aminoacyl-tRNA synthetase family. Phe-tRNA synthetase alpha subunit type 1 subfamily. In terms of assembly, tetramer of two alpha and two beta subunits. Requires Mg(2+) as cofactor.

The protein localises to the cytoplasm. It catalyses the reaction tRNA(Phe) + L-phenylalanine + ATP = L-phenylalanyl-tRNA(Phe) + AMP + diphosphate + H(+). This chain is Phenylalanine--tRNA ligase alpha subunit (pheS), found in Mycoplasma pneumoniae (strain ATCC 29342 / M129 / Subtype 1) (Mycoplasmoides pneumoniae).